A 581-amino-acid chain; its full sequence is mRNA-decapping enzyme 1B (581 aa).

Ser145 bears the Phosphoserine mark. 2 disordered regions span residues 181–222 (QISS…PEPQ) and 236–258 (APCQ…PEKF). Positions 204 to 219 (GSRQQRGPRPGQTSDP) are enriched in polar residues. Low complexity predominate over residues 244-255 (PPQTLPLQQQQP). A phosphoserine mark is found at Ser269 and Ser326. The interval 349-411 (AENRCEPGAP…HQPVTGPGEV (63 aa)) is disordered. The span at 355 to 367 (PGAPAPASSATTP) shows a compositional bias: low complexity. Position 366 is a phosphothreonine (Thr366). The segment covering 368–381 (VSLAQPTRLSSALP) has biased composition (polar residues). Pro residues predominate over residues 382 to 401 (PQTPGPRALPRPAPPGPGPG). Ser412 carries the post-translational modification Phosphoserine. Residues 427 to 468 (QQLPAPGRPALAAKFPTATLSTRARNPLEPWRDPPPSTEQPA) form a disordered region. Ser475 bears the Phosphoserine mark. The interval 498-522 (SWAPPQERSRAPLPPGNQDPAATPT) is disordered.

This sequence belongs to the DCP1 family. Interacts with DCP1A.

It localises to the cytoplasm. Its subcellular location is the nucleus. The catalysed reaction is a 5'-end (N(7)-methyl 5'-triphosphoguanosine)-ribonucleoside in mRNA + H2O = N(7)-methyl-GDP + a 5'-end phospho-ribonucleoside in mRNA + 2 H(+). In terms of biological role, may play a role in the degradation of mRNAs, both in normal mRNA turnover and in nonsense-mediated mRNA decay. May remove the 7-methyl guanine cap structure from mRNA molecules, yielding a 5'-phosphorylated mRNA fragment and 7m-GDP. The chain is mRNA-decapping enzyme 1B (DCP1B) from Bos taurus (Bovine).